We begin with the raw amino-acid sequence, 439 residues long: ATP-dependent RNA helicase RhlB (439 aa).

Positions 9–37 match the Q motif motif; that stretch reads QKFADLPLHPEVKQALAENGFEFCTPIQA. The 180-residue stretch at 40-219 folds into the Helicase ATP-binding domain; the sequence is LPVLLQSKDI…YDHMNEPVKV (180 aa). 53-60 is a binding site for ATP; the sequence is AQTGTGKT. Positions 165–168 match the DEAD box motif; the sequence is DEAD. Positions 243-390 constitute a Helicase C-terminal domain; sequence KMRLLLTLIE…VSNYDRDALL (148 aa). The disordered stretch occupies residues 395–439; it reads PPVKIHRRHPAGARNLRERSGAGRPQGAHRSGGRPPRHDRTRRQP. Basic residues predominate over residues 425–439; it reads SGGRPPRHDRTRRQP.

The protein belongs to the DEAD box helicase family. RhlB subfamily. Component of the RNA degradosome, which is a multiprotein complex involved in RNA processing and mRNA degradation.

It is found in the cytoplasm. It carries out the reaction ATP + H2O = ADP + phosphate + H(+). In terms of biological role, DEAD-box RNA helicase involved in RNA degradation. Has RNA-dependent ATPase activity and unwinds double-stranded RNA. This chain is ATP-dependent RNA helicase RhlB, found in Shewanella sp. (strain ANA-3).